We begin with the raw amino-acid sequence, 64 residues long: Large ribosomal subunit protein bL35 (64 aa).

Belongs to the bacterial ribosomal protein bL35 family.

The sequence is that of Large ribosomal subunit protein bL35 from Chlorobium chlorochromatii (strain CaD3).